An 875-amino-acid polypeptide reads, in one-letter code: Serrate RNA effector molecule homolog (875 aa).

The interval 1–90 (MGDSDDEYDR…RRDWDEHSSD (90 aa)) is disordered. An N-acetylglycine modification is found at glycine 2. Phosphoserine is present on serine 4. A Phosphotyrosine modification is found at tyrosine 8. Residues 8 to 73 (YDRRRRDKFR…ERFSPPRHEL (66 aa)) show a composition bias toward basic and acidic residues. 3 positions are modified to phosphoserine: serine 67, serine 74, and serine 136. Lysine 150 is covalently cross-linked (Glycyl lysine isopeptide (Lys-Gly) (interchain with G-Cter in SUMO2)). The segment at 272–411 (EEEEQAGKTG…KPKDAAGLEC (140 aa)) is disordered. The segment covering 297-345 (EGERKANDKDEKKEDGKQAENDSSNDDKTKKSEGDGDKEEKKEEAEKEA) has biased composition (basic and acidic residues). Positions 369 to 386 (SESESEGGQAEEEKEEAE) are enriched in acidic residues. Over residues 387 to 411 (EALKEKEKPKEEEKEKPKDAAGLEC) the composition is skewed to basic and acidic residues. Phosphoserine occurs at positions 492 and 539. At threonine 543 the chain carries Phosphothreonine. Residue serine 569 is modified to Phosphoserine. A disordered region spans residues 571–597 (EEEELLGSSGGPPPEEPPKEGNPAEIN). Phosphothreonine is present on threonine 670. A Phosphoserine modification is found at serine 678. 3 positions are modified to omega-N-methylarginine: arginine 832, arginine 839, and arginine 849. Positions 834–853 (NYDAFRGQGGYPGKPRNRMV) are disordered.

Belongs to the ARS2 family. In terms of assembly, interacts with CASP8AP2 and ERBB4. Interacts with NCBP1/CBP80 and DROSHA. Interacts with LUZP4. Interacts with NCBP2/CBP20 and NCBP3. Interacts with MTREX. In terms of tissue distribution, widely expressed, with a preference for proliferating cells. Highly expressed in hematopoietic tissues and reduced or absent expression in parenchymal organs like liver and kidney. In the brain, expressed in the subventricular zone by niche astrocytes, ependymal cells and neural stem cells. In this cerebral context, expressed in slowly dividing cells.

It is found in the nucleus. The protein localises to the nucleoplasm. It localises to the cytoplasm. Functionally, acts as a mediator between the cap-binding complex (CBC) and the primary microRNAs (miRNAs) processing machinery during cell proliferation. Contributes to the stability and delivery of capped primary miRNA transcripts to the primary miRNA processing complex containing DGCR8 and DROSHA, thereby playing a role in RNA-mediated gene silencing (RNAi) by miRNAs. Binds capped RNAs (m7GpppG-capped RNA); however interaction is probably mediated via its interaction with NCBP1/CBP80 component of the CBC complex. Involved in cell cycle progression at S phase. Does not directly confer arsenite resistance but rather modulates arsenic sensitivity. Independently of its activity on miRNAs, necessary and sufficient to promote neural stem cell self-renewal. Does so by directly binding SOX2 promoter and positively regulating its transcription. This Mus musculus (Mouse) protein is Serrate RNA effector molecule homolog (Srrt).